A 331-amino-acid chain; its full sequence is Geranylgeranyl pyrophosphate synthase dpmaD (331 aa).

Isopentenyl diphosphate-binding residues include lysine 53, arginine 56, and histidine 85. Aspartate 92 and aspartate 96 together coordinate Mg(2+). Position 101 (arginine 101) interacts with dimethylallyl diphosphate. Position 102 (arginine 102) interacts with isopentenyl diphosphate. Dimethylallyl diphosphate contacts are provided by lysine 179, threonine 180, and glutamine 213. Mg(2+) is bound at residue aspartate 216. 3 residues coordinate dimethylallyl diphosphate: asparagine 220, lysine 230, and lysine 240.

This sequence belongs to the FPP/GGPP synthase family. It depends on Mg(2+) as a cofactor.

It carries out the reaction isopentenyl diphosphate + dimethylallyl diphosphate = (2E)-geranyl diphosphate + diphosphate. The catalysed reaction is isopentenyl diphosphate + (2E)-geranyl diphosphate = (2E,6E)-farnesyl diphosphate + diphosphate. The enzyme catalyses isopentenyl diphosphate + (2E,6E)-farnesyl diphosphate = (2E,6E,10E)-geranylgeranyl diphosphate + diphosphate. It functions in the pathway secondary metabolite biosynthesis; terpenoid biosynthesis. Functionally, geranylgeranyl pyrophosphate synthase; part of the gene cluster that mediates the biosynthesis of the diterpenoid pyrones subglutinols A and B. The first step of the pathway is the synthesis of the alpha-pyrone moiety by the polyketide synthase dpmaA via condensation of one acetyl-CoA starter unit with 3 malonyl-CoA units and 2 methylations. The alpha-pyrone is then combined with geranylgeranyl pyrophosphate (GGPP) formed by the GGPP synthase dpmaD through the action of the prenyltransferase dpmaC to yield a linear alpha-pyrone diterpenoid. Subsequent steps in the diterpenoid pyrone biosynthetic pathway involve the decalin core formation, which is initiated by the epoxidation of the C10-C11 olefin by the FAD-dependent oxidoreductase dpmaE, and is followed by a cyclization cascade catalyzed by the terpene cyclase dpmaB. The dehydrogenase dpmaF is then involved in tetrahydrofuran (THF) ring formation at the C5 unit to complete the formation of subglutinols A and B. This chain is Geranylgeranyl pyrophosphate synthase dpmaD, found in Metarhizium anisopliae (Entomophthora anisopliae).